Reading from the N-terminus, the 408-residue chain is Innexin-12 (408 aa).

The chain crosses the membrane as a helical span at residues 29–49 (TIGLVLASAFITGWSFVGSPI). N99 is a glycosylation site (N-linked (GlcNAc...) asparagine). The next 3 helical transmembrane spans lie at 113–133 (QWVP…VVIW), 197–217 (VITS…FQFV), and 284–304 (IFVA…TNTI).

This sequence belongs to the pannexin family.

The protein localises to the cell membrane. Its subcellular location is the cell junction. The protein resides in the gap junction. Structural component of the gap junctions. Plays a role in oocyte directional transit in the spermatheca during ovulation by facilitating the directional propagation of the calcium signal in the spermatheca. Plays a role in male tail tip morphogenesis. The protein is Innexin-12 of Caenorhabditis elegans.